Consider the following 408-residue polypeptide: Peptidase T (408 aa).

His79 is a binding site for Zn(2+). The active site involves Asp81. Zn(2+) is bound at residue Asp139. Residue Glu173 is the Proton acceptor of the active site. Zn(2+) contacts are provided by Glu174, Asp196, and His378.

It belongs to the peptidase M20B family. Requires Zn(2+) as cofactor.

Its subcellular location is the cytoplasm. The catalysed reaction is Release of the N-terminal residue from a tripeptide.. In terms of biological role, cleaves the N-terminal amino acid of tripeptides. In Shouchella clausii (strain KSM-K16) (Alkalihalobacillus clausii), this protein is Peptidase T.